The following is a 209-amino-acid chain: Orotate phosphoribosyltransferase (209 aa).

Residues Arg-96, Lys-100, His-102, and 122–130 (EDLISTGGS) contribute to the 5-phospho-alpha-D-ribose 1-diphosphate site. Ser-126 provides a ligand contact to orotate.

It belongs to the purine/pyrimidine phosphoribosyltransferase family. PyrE subfamily. In terms of assembly, homodimer. Mg(2+) serves as cofactor.

The enzyme catalyses orotidine 5'-phosphate + diphosphate = orotate + 5-phospho-alpha-D-ribose 1-diphosphate. It functions in the pathway pyrimidine metabolism; UMP biosynthesis via de novo pathway; UMP from orotate: step 1/2. In terms of biological role, catalyzes the transfer of a ribosyl phosphate group from 5-phosphoribose 1-diphosphate to orotate, leading to the formation of orotidine monophosphate (OMP). This chain is Orotate phosphoribosyltransferase, found in Listeria monocytogenes serotype 4b (strain F2365).